The primary structure comprises 275 residues: Large ribosomal subunit protein uL2c (275 aa).

Residues 225–252 (MNPCDHPHGGGEGRSPIGRAKPVTPWGK) form a disordered region.

Belongs to the universal ribosomal protein uL2 family. As to quaternary structure, part of the 50S ribosomal subunit.

The protein localises to the plastid. The protein resides in the chloroplast. The polypeptide is Large ribosomal subunit protein uL2c (rpl2) (Guillardia theta (Cryptophyte)).